The chain runs to 120 residues: NAD(P)H-quinone oxidoreductase subunit 3, chloroplastic (120 aa).

A run of 3 helical transmembrane segments spans residues 9-29, 64-84, and 88-108; these read IFWT…WISG, MFAL…PWAM, and VLGV…VVGL.

This sequence belongs to the complex I subunit 3 family. As to quaternary structure, NDH is composed of at least 16 different subunits, 5 of which are encoded in the nucleus.

The protein resides in the plastid. The protein localises to the chloroplast thylakoid membrane. It carries out the reaction a plastoquinone + NADH + (n+1) H(+)(in) = a plastoquinol + NAD(+) + n H(+)(out). The catalysed reaction is a plastoquinone + NADPH + (n+1) H(+)(in) = a plastoquinol + NADP(+) + n H(+)(out). Functionally, NDH shuttles electrons from NAD(P)H:plastoquinone, via FMN and iron-sulfur (Fe-S) centers, to quinones in the photosynthetic chain and possibly in a chloroplast respiratory chain. The immediate electron acceptor for the enzyme in this species is believed to be plastoquinone. Couples the redox reaction to proton translocation, and thus conserves the redox energy in a proton gradient. In Lolium perenne (Perennial ryegrass), this protein is NAD(P)H-quinone oxidoreductase subunit 3, chloroplastic.